We begin with the raw amino-acid sequence, 58 residues long: MSEIKVGENESLESALRRFKRKCARAGVLSEVRKREHYEKPSVKRKKKSEAARKRKFK.

Residues 34–58 (KREHYEKPSVKRKKKSEAARKRKFK) are disordered. Residues 43 to 58 (VKRKKKSEAARKRKFK) are compositionally biased toward basic residues.

The protein belongs to the bacterial ribosomal protein bS21 family.

The sequence is that of Small ribosomal subunit protein bS21 from Clostridium acetobutylicum (strain ATCC 824 / DSM 792 / JCM 1419 / IAM 19013 / LMG 5710 / NBRC 13948 / NRRL B-527 / VKM B-1787 / 2291 / W).